The primary structure comprises 84 residues: Small ribosomal subunit protein bS20 (84 aa).

The segment at 1–32 is disordered; that stretch reads MPRHESAKKRMRQNEKRQKRNKSQKSRVRTKI.

The protein belongs to the bacterial ribosomal protein bS20 family.

Its function is as follows. Binds directly to 16S ribosomal RNA. This is Small ribosomal subunit protein bS20 from Salinibacter ruber (strain DSM 13855 / M31).